We begin with the raw amino-acid sequence, 473 residues long: Ribulose bisphosphate carboxylase large chain (473 aa).

2 residues coordinate substrate: N116 and T166. K168 acts as the Proton acceptor in catalysis. Position 170 (K170) interacts with substrate. 3 residues coordinate Mg(2+): K194, D196, and E197. K194 is subject to N6-carboxylysine. The active-site Proton acceptor is the H287. The substrate site is built by R288, H320, and S372.

Belongs to the RuBisCO large chain family. Type I subfamily. Heterohexadecamer of 8 large chains and 8 small chains. Mg(2+) serves as cofactor.

It catalyses the reaction 2 (2R)-3-phosphoglycerate + 2 H(+) = D-ribulose 1,5-bisphosphate + CO2 + H2O. It carries out the reaction D-ribulose 1,5-bisphosphate + O2 = 2-phosphoglycolate + (2R)-3-phosphoglycerate + 2 H(+). Functionally, ruBisCO catalyzes two reactions: the carboxylation of D-ribulose 1,5-bisphosphate, the primary event in carbon dioxide fixation, as well as the oxidative fragmentation of the pentose substrate. Both reactions occur simultaneously and in competition at the same active site. In Nitrosomonas sp. (strain ENI-11), this protein is Ribulose bisphosphate carboxylase large chain.